A 357-amino-acid polypeptide reads, in one-letter code: Cobalt-precorrin-5B C(1)-methyltransferase (357 aa).

It belongs to the CbiD family.

The enzyme catalyses Co-precorrin-5B + S-adenosyl-L-methionine = Co-precorrin-6A + S-adenosyl-L-homocysteine. It participates in cofactor biosynthesis; adenosylcobalamin biosynthesis; cob(II)yrinate a,c-diamide from sirohydrochlorin (anaerobic route): step 6/10. In terms of biological role, catalyzes the methylation of C-1 in cobalt-precorrin-5B to form cobalt-precorrin-6A. In Alkaliphilus oremlandii (strain OhILAs) (Clostridium oremlandii (strain OhILAs)), this protein is Cobalt-precorrin-5B C(1)-methyltransferase.